The primary structure comprises 855 residues: DNA mismatch repair protein MutS (855 aa).

613–620 lines the ATP pocket; sequence GPNMGGKS. A disordered region spans residues 796 to 816; it reads TTSLPHEMPSQQSGKPASPMQ.

The protein belongs to the DNA mismatch repair MutS family.

Functionally, this protein is involved in the repair of mismatches in DNA. It is possible that it carries out the mismatch recognition step. This protein has a weak ATPase activity. The chain is DNA mismatch repair protein MutS from Pseudomonas aeruginosa (strain LESB58).